We begin with the raw amino-acid sequence, 557 residues long: Dihydroxy-acid dehydratase (557 aa).

C49 provides a ligand contact to [2Fe-2S] cluster. D81 contributes to the Mg(2+) binding site. Position 122 (C122) interacts with [2Fe-2S] cluster. D123 and K124 together coordinate Mg(2+). Residue K124 is modified to N6-carboxylysine. C194 contacts [2Fe-2S] cluster. Residue E446 participates in Mg(2+) binding. The Proton acceptor role is filled by S472.

The protein belongs to the IlvD/Edd family. Homodimer. [2Fe-2S] cluster is required as a cofactor. Mg(2+) serves as cofactor.

It carries out the reaction (2R)-2,3-dihydroxy-3-methylbutanoate = 3-methyl-2-oxobutanoate + H2O. It catalyses the reaction (2R,3R)-2,3-dihydroxy-3-methylpentanoate = (S)-3-methyl-2-oxopentanoate + H2O. Its pathway is amino-acid biosynthesis; L-isoleucine biosynthesis; L-isoleucine from 2-oxobutanoate: step 3/4. It participates in amino-acid biosynthesis; L-valine biosynthesis; L-valine from pyruvate: step 3/4. Its function is as follows. Functions in the biosynthesis of branched-chain amino acids. Catalyzes the dehydration of (2R,3R)-2,3-dihydroxy-3-methylpentanoate (2,3-dihydroxy-3-methylvalerate) into 2-oxo-3-methylpentanoate (2-oxo-3-methylvalerate) and of (2R)-2,3-dihydroxy-3-methylbutanoate (2,3-dihydroxyisovalerate) into 2-oxo-3-methylbutanoate (2-oxoisovalerate), the penultimate precursor to L-isoleucine and L-valine, respectively. The polypeptide is Dihydroxy-acid dehydratase (Prochlorococcus marinus (strain MIT 9215)).